Consider the following 215-residue polypeptide: Ras-related protein Rab-5B (215 aa).

Ser29, Ala30, Gly32, Lys33, Ser34, Ser35, His46, Glu47, Thr52, Gly78, Asn133, Lys134, Asp136, Ala164, and Lys165 together coordinate GTP. Ser34 is a Mg(2+) binding site. 2 consecutive short sequence motifs (switch) follow at residues 44–56 and 77–93; these read QFHE…IGAA and AGQE…YRGA. Thr52 contributes to the Mg(2+) binding site. Residues 184–215 form a disordered region; that stretch reads SEPQSTSGAAGRSRGVDLHEQTQQNKSQCCSN. Residues 204–215 are compositionally biased toward polar residues; it reads QTQQNKSQCCSN. Residues Cys212 and Cys213 are each lipidated (S-geranylgeranyl cysteine).

Belongs to the small GTPase superfamily. Rab family. The cofactor is Mg(2+).

Its subcellular location is the cell membrane. The protein resides in the early endosome membrane. It carries out the reaction GTP + H2O = GDP + phosphate + H(+). Regulated by guanine nucleotide exchange factors (GEFs) which promote the exchange of bound GDP for free GTP. Regulated by GTPase activating proteins (GAPs) which increase the GTP hydrolysis activity. Inhibited by GDP dissociation inhibitors (GDIs). Its function is as follows. The small GTPases Rab are key regulators of intracellular membrane trafficking, from the formation of transport vesicles to their fusion with membranes. Rabs cycle between an inactive GDP-bound form and an active GTP-bound form that is able to recruit to membranes different sets of downstream effectors directly responsible for vesicle formation, movement, tethering and fusion. This is Ras-related protein Rab-5B (RAB5B) from Gallus gallus (Chicken).